We begin with the raw amino-acid sequence, 314 residues long: Olfactory receptor 14K1 (314 aa).

At Met-1–Arg-23 the chain is on the extracellular side. N-linked (GlcNAc...) asparagine glycosylation is present at Asn-3. Residues Leu-24–Ile-44 form a helical membrane-spanning segment. The Cytoplasmic segment spans residues Leu-45–Arg-52. The chain crosses the membrane as a helical span at residues Leu-53–Ser-73. At Ala-74–Leu-97 the chain is on the extracellular side. Cys-95 and Cys-187 form a disulfide bridge. The chain crosses the membrane as a helical span at residues Gln-98 to Tyr-118. Residues Asp-119 to Glu-131 are Cytoplasmic-facing. A helical transmembrane segment spans residues Ala-132–Ala-152. The Extracellular portion of the chain corresponds to Leu-153–Ile-194. The chain crosses the membrane as a helical span at residues Ser-195–Ser-215. At Tyr-216–Ala-235 the chain is on the cytoplasmic side. A helical transmembrane segment spans residues Phe-236–Ala-256. The Extracellular segment spans residues Tyr-257–Asp-269. Residues Leu-270–Leu-290 form a helical membrane-spanning segment. Topologically, residues Lys-291 to Arg-314 are cytoplasmic.

Belongs to the G-protein coupled receptor 1 family.

It is found in the cell membrane. Odorant receptor. The polypeptide is Olfactory receptor 14K1 (OR14K1) (Homo sapiens (Human)).